Here is a 469-residue protein sequence, read N- to C-terminus: ATP synthase subunit beta (469 aa).

155 to 162 (GGAGVGKT) is an ATP binding site.

This sequence belongs to the ATPase alpha/beta chains family. As to quaternary structure, F-type ATPases have 2 components, CF(1) - the catalytic core - and CF(0) - the membrane proton channel. CF(1) has five subunits: alpha(3), beta(3), gamma(1), delta(1), epsilon(1). CF(0) has three main subunits: a(1), b(2) and c(9-12). The alpha and beta chains form an alternating ring which encloses part of the gamma chain. CF(1) is attached to CF(0) by a central stalk formed by the gamma and epsilon chains, while a peripheral stalk is formed by the delta and b chains.

Its subcellular location is the cell inner membrane. It catalyses the reaction ATP + H2O + 4 H(+)(in) = ADP + phosphate + 5 H(+)(out). Its function is as follows. Produces ATP from ADP in the presence of a proton gradient across the membrane. The catalytic sites are hosted primarily by the beta subunits. The chain is ATP synthase subunit beta from Helicobacter pylori (strain ATCC 700392 / 26695) (Campylobacter pylori).